The primary structure comprises 614 residues: V-type proton ATPase catalytic subunit A isoform 1 (614 aa).

Position 247–254 (247–254) interacts with ATP; that stretch reads GAFGCGKT.

Belongs to the ATPase alpha/beta chains family. In terms of assembly, V-ATPase is a heteromultimeric enzyme made up of two complexes: the ATP-hydrolytic V1 complex and the proton translocation V0 complex. The V1 complex consists of three catalytic AB heterodimers that form a heterohexamer, three peripheral stalks each consisting of EG heterodimers, one central rotor including subunits D and F, and the regulatory subunits C and H. The proton translocation complex V0 consists of the proton transport subunit a, a ring of proteolipid subunits c9c'', rotary subunit d, subunits e and f, and the accessory subunits VhaAC45 and ATP6AP2.

It carries out the reaction ATP + H2O + 4 H(+)(in) = ADP + phosphate + 5 H(+)(out). With respect to regulation, ATP hydrolysis occurs at the interface between the nucleotide-binding domains of subunits A and B. ATP hydrolysis triggers a conformational change in the subunits D and F, which induces a shift of subunit d. The c-ring is subsequently rotated and results in a continuous proton translocation across the membrane. Catalytic subunit of the V1 complex of vacuolar(H+)-ATPase (V-ATPase), a multisubunit enzyme composed of a peripheral complex (V1) that hydrolyzes ATP and a membrane integral complex (V0) that translocates protons. V-ATPase is responsible for acidifying and maintaining the pH of intracellular compartments and in some cell types, is targeted to the plasma membrane, where it is responsible for acidifying the extracellular environment. The protein is V-type proton ATPase catalytic subunit A isoform 1 (Vha68-1) of Drosophila melanogaster (Fruit fly).